Here is a 248-residue protein sequence, read N- to C-terminus: Coproheme decarboxylase (248 aa).

Residues R130, Y144–K148, H171, Q184, and S222 each bind Fe-coproporphyrin III. Y144 is a catalytic residue.

Belongs to the ChdC family. Type 1 subfamily. Homopentamer. Fe-coproporphyrin III serves as cofactor.

It catalyses the reaction Fe-coproporphyrin III + 2 H2O2 + 2 H(+) = heme b + 2 CO2 + 4 H2O. The catalysed reaction is Fe-coproporphyrin III + H2O2 + H(+) = harderoheme III + CO2 + 2 H2O. The enzyme catalyses harderoheme III + H2O2 + H(+) = heme b + CO2 + 2 H2O. It functions in the pathway porphyrin-containing compound metabolism; protoheme biosynthesis. In terms of biological role, involved in coproporphyrin-dependent heme b biosynthesis. Catalyzes the decarboxylation of Fe-coproporphyrin III (coproheme) to heme b (protoheme IX), the last step of the pathway. The reaction occurs in a stepwise manner with a three-propionate intermediate. The polypeptide is Coproheme decarboxylase (Geobacillus kaustophilus (strain HTA426)).